The following is a 513-amino-acid chain: ATP synthase subunit alpha (513 aa).

169–176 (GDRQTGKT) lines the ATP pocket.

The protein belongs to the ATPase alpha/beta chains family. As to quaternary structure, F-type ATPases have 2 components, CF(1) - the catalytic core - and CF(0) - the membrane proton channel. CF(1) has five subunits: alpha(3), beta(3), gamma(1), delta(1), epsilon(1). CF(0) has three main subunits: a(1), b(2) and c(9-12). The alpha and beta chains form an alternating ring which encloses part of the gamma chain. CF(1) is attached to CF(0) by a central stalk formed by the gamma and epsilon chains, while a peripheral stalk is formed by the delta and b chains.

The protein resides in the cell inner membrane. It catalyses the reaction ATP + H2O + 4 H(+)(in) = ADP + phosphate + 5 H(+)(out). Its function is as follows. Produces ATP from ADP in the presence of a proton gradient across the membrane. The alpha chain is a regulatory subunit. The chain is ATP synthase subunit alpha from Vibrio vulnificus (strain CMCP6).